We begin with the raw amino-acid sequence, 260 residues long: Snake venom serine protease pallabin (260 aa).

Positions M1–A18 are cleaved as a signal peptide. Positions Q19 to L24 are excised as a propeptide. The region spanning V25 to A251 is the Peptidase S1 domain. 6 cysteine pairs are disulfide-bonded: C31-C163, C50-C66, C98-C258, C142-C212, C174-C191, and C202-C227. Catalysis depends on H65, which acts as the Charge relay system. Residue N103 is glycosylated (N-linked (GlcNAc...) asparagine). D110 (charge relay system) is an active-site residue. The active-site Charge relay system is the S206.

The protein belongs to the peptidase S1 family. Snake venom subfamily. Monomer. In terms of tissue distribution, expressed by the venom gland.

Its subcellular location is the secreted. Functionally, snake venom serine protease that may act in the hemostasis system of the prey. In Gloydius halys (Chinese water mocassin), this protein is Snake venom serine protease pallabin (JZTHR5).